The chain runs to 230 residues: Cytidylate kinase (230 aa).

14-22 (GPSGVGKSS) serves as a coordination point for ATP.

Belongs to the cytidylate kinase family. Type 1 subfamily.

It localises to the cytoplasm. It carries out the reaction CMP + ATP = CDP + ADP. The enzyme catalyses dCMP + ATP = dCDP + ADP. The polypeptide is Cytidylate kinase (Buchnera aphidicola subsp. Baizongia pistaciae (strain Bp)).